Consider the following 695-residue polypeptide: DNA topoisomerase 4 subunit B (695 aa).

The interval 1–53 (MSSSDKIPSLFGDDDALAPVPAAPFKASVEPRVEPTPRPIPPPPPSKTASAPG) is disordered. Pro residues predominate over residues 36–46 (TPRPIPPPPPS). ATP is bound by residues Tyr-55, Asn-95, Asp-122, 164 to 170 (GLHGVGA), and Lys-397. The Toprim domain occupies 477-591 (AELFIVEGDS…GGHLFLALPP (115 aa)). Mg(2+) is bound by residues Glu-483, Asp-556, and Asp-558.

This sequence belongs to the type II topoisomerase family. ParE type 1 subfamily. In terms of assembly, heterotetramer composed of ParC and ParE. The cofactor is Mg(2+). Mn(2+) serves as cofactor. Requires Ca(2+) as cofactor.

It catalyses the reaction ATP-dependent breakage, passage and rejoining of double-stranded DNA.. Functionally, topoisomerase IV is essential for chromosome segregation. It relaxes supercoiled DNA. Performs the decatenation events required during the replication of a circular DNA molecule. The chain is DNA topoisomerase 4 subunit B from Caulobacter vibrioides (strain ATCC 19089 / CIP 103742 / CB 15) (Caulobacter crescentus).